Here is a 214-residue protein sequence, read N- to C-terminus: MAALSFQCLCVASAVRAWERIESMVDVSFDVIIAASAQTIQLSQQSQQCQLHSQSSAAEAYNTFIRIYGRLVPLLERAITTYATNLQPPLSTSPTFQRTDPRNLTYPLDNQVLGSVLRDFSTHRSLQEQRNPATMVCRPSKMTLGQYEMDEQQSQYLALDVICRTLRNLVIVLQEMGGGENAEIRQVDARLLTILVQVRRLLENTSATLSILES.

An N-terminal signal peptide occupies residues Met-1 to Ala-17. 2 N-linked (GlcNAc...) asparagine glycosylation sites follow: Asn-103 and Asn-204.

The protein operates within secondary metabolite biosynthesis. In terms of biological role, part of the cla gene cluster that produces clavatol and ortho-quinone methide. The clavatol biosynthesis cluster cla and the terrestric acid cluster tra are both involved in the production of peniphenones and penilactones. The non-reducing PKS claF is responsible for the formation of clavatol from successive condensations of 3 malonyl-CoA units, presumably with a simple acetyl-CoA starter unit, and 2 methylation steps. The esterase claE probably collaborates with claF by catalyzing the hydrolysis of ACP-bound acyl intermediates to free the ACP from stalled intermediates. The clavatol oxidase claD then converts clavatol to hydroxyclavatol. Spontaneous dehydration of hydroxyclavatol leads to the accumulation of the highly active ortho-quinone methide. On the other hand, the PKS-NRPS hybrid traA is involved in the formation of crustosic acid, with the help of traB and traD. The polyketide synthase module (PKS) of traA is responsible for the synthesis of the polyketide backbone via the condensation of an acetyl-CoA starter unit with 3 malonyl-CoA units. The downstream nonribosomal peptide synthetase (NRPS) module then amidates the carboxyl end of the polyketide with L-malic acid. Because traA lacks a designated enoylreductase (ER) domain, the required activity is provided the enoyl reductase traG. Crustosic acid undergoes decarboxylation and isomerization to the terrestric acid, catalyzed by the 2-oxoglutarate-dependent dioxygenase traH. Both acids are further converted to the 2 gamma-butyrolactones (R)-5-methyltetronic acid and (S)-5-carboxylmethyltetronic acid, with involvement of the cytochrome P450 monooxygenase claJ. Spontaneous addition of the methide to these gamma-butyrolactones leads to peniphenone D and penilactone D, which undergo again stereospecific attacking by methide to give penilactones A and B. The function of claB has not been investigated yet. The protein is Clavatol biosynthesis cluster protein B of Penicillium crustosum (Blue mold fungus).